The sequence spans 1348 residues: Vascular endothelial growth factor receptor 2 (1348 aa).

Positions M1–A20 are cleaved as a signal peptide. The Extracellular segment spans residues G21–L756. N43, N47, N63, N93, N138, N153, N201, N240, N290, N310, N365, N386, N513, N556, N603, N613, N622, N666, N688, and N710 each carry an N-linked (GlcNAc...) asparagine glycan. Ig-like C2-type domains lie at N43–Q106, N138–E202, D220–S312, P320–T405, P412–S534, G540–T651, and P658–S744. An intrachain disulfide couples C50 to C100. Residues C145 and C195 are joined by a disulfide bond. Cysteines 241 and 299 form a disulfide. The cysteines at positions 436 and 520 are disulfide-linked. Residues C561 and C633 are joined by a disulfide bond. A disulfide bridge links C679 with C728. Residues I757–L777 form a helical membrane-spanning segment. At R778 to L1348 the chain is on the cytoplasmic side. One can recognise a Protein kinase domain in the interval L825 to N1155. ATP-binding positions include L831–V839 and K859. Residues I958–S967 show a composition bias toward low complexity. The disordered stretch occupies residues I958–A983. D1021 serves as the catalytic Proton acceptor. 4 positions are modified to phosphotyrosine; by autocatalysis: Y1047, Y1052, Y1168, and Y1207. Residues P1280–Y1302 form a disordered region.

It belongs to the protein kinase superfamily. Tyr protein kinase family. CSF-1/PDGF receptor subfamily. Post-translationally, autophosphorylated on tyrosine residues upon ligand binding. Autophosphorylation occurs in trans, i.e. one subunit of the dimeric receptor phosphorylates tyrosine residues on the other subunit. In all endothelial tissues during onset of vascularization. In later development, present in lung, heart, intestine and skin.

The protein resides in the cell membrane. It localises to the cytoplasmic vesicle. It is found in the early endosome. Its subcellular location is the cell junction. The protein localises to the endoplasmic reticulum. The enzyme catalyses L-tyrosyl-[protein] + ATP = O-phospho-L-tyrosyl-[protein] + ADP + H(+). Present in an inactive conformation in the absence of bound ligand. Binding of VEGFA, VEGFC or VEGFD leads to dimerization and activation by autophosphorylation on tyrosine residues. Tyrosine-protein kinase that acts as a cell-surface receptor for VEGFA, VEGFC and/or VEGFD and plays an essential role in the regulation of angiogenesis and vascular development. Promotes proliferation, survival, migration and differentiation of endothelial cells. Promotes reorganization of the actin cytoskeleton. Binding of vascular growth factors leads to the activation of several signaling cascades. Activation of PLCG1 leads to the production of the cellular signaling molecules diacylglycerol and inositol 1,4,5-trisphosphate and the activation of protein kinase C. Mediates activation of MAPK1/ERK2, MAPK3/ERK1 and the MAP kinase signaling pathway, as well as of the AKT1 signaling pathway. Mediates phosphorylation of PIK3R1, the regulatory subunit of phosphatidylinositol 3-kinase, reorganization of the actin cytoskeleton and activation of PTK2/FAK1. Required for VEGFA-mediated induction of NOS2 and NOS3, leading to the production of the signaling molecule nitric oxide (NO) by endothelial cells. The sequence is that of Vascular endothelial growth factor receptor 2 from Coturnix japonica (Japanese quail).